The sequence spans 144 residues: Eukaryotic translation initiation factor 1A, Y-chromosomal (144 aa).

Over residues 1-15 the composition is skewed to basic residues; that stretch reads MPKNKGKGGKNRRRG. The tract at residues 1–26 is disordered; the sequence is MPKNKGKGGKNRRRGKNENESEKREL. Basic and acidic residues predominate over residues 16-26; the sequence is KNENESEKREL. One can recognise an S1-like domain in the interval 22 to 96; sequence EKRELVFKED…NKADVILKYN (75 aa). Residue K88 forms a Glycyl lysine isopeptide (Lys-Gly) (interchain with G-Cter in ubiquitin) linkage. The disordered stretch occupies residues 114-144; it reads KINETDTFGPGDDDEVQFDDIGDDDEDIDDI. A compositionally biased stretch (acidic residues) spans 124–144; the sequence is GDDDEVQFDDIGDDDEDIDDI.

It belongs to the eIF-1A family. In terms of assembly, component of the 43S pre-initiation complex (43S PIC), which is composed of the 40S ribosomal subunit, EIF1, eIF1A (EIF1AX), eIF3 complex, EIF5 and eIF2-GTP-initiator tRNA complex (eIF2 ternary complex). Interacts with EIF5; this interaction contributes to the maintenance of EIF1 within the open 43S PIC. Interacts through its C-terminal domain (CTD) with the CTD of EIF5B; from the location of the start codon by the 43S complex until the formation of the 80S complex. In terms of tissue distribution, ubiquitous.

The protein resides in the cytoplasm. Component of the 43S pre-initiation complex (43S PIC), which binds to the mRNA cap-proximal region, scans mRNA 5'-untranslated region, and locates the initiation codon. This protein enhances formation of the cap-proximal complex. Together with EIF1, facilitates scanning, start codon recognition, promotion of the assembly of 48S complex at the initiation codon (43S PIC becomes 48S PIC after the start codon is reached), and dissociation of aberrant complexes. After start codon location, together with EIF5B orients the initiator methionine-tRNA in a conformation that allows 60S ribosomal subunit joining to form the 80S initiation complex. Is released after 80S initiation complex formation, just after GTP hydrolysis by EIF5B, and before release of EIF5B. Its globular part is located in the A site of the 40S ribosomal subunit. Its interaction with EIF5 during scanning contribute to the maintenance of EIF1 within the open 43S PIC. In contrast to yeast orthologs, does not bind EIF1. The polypeptide is Eukaryotic translation initiation factor 1A, Y-chromosomal (EIF1AY) (Pan troglodytes (Chimpanzee)).